A 546-amino-acid chain; its full sequence is Chaperonin GroEL 1 (546 aa).

ATP-binding positions include 29 to 32 (TLGP), 86 to 90 (DGTTT), glycine 414, and aspartate 499.

This sequence belongs to the chaperonin (HSP60) family. As to quaternary structure, forms a cylinder of 14 subunits composed of two heptameric rings stacked back-to-back. Interacts with the co-chaperonin GroES.

Its subcellular location is the cytoplasm. It carries out the reaction ATP + H2O + a folded polypeptide = ADP + phosphate + an unfolded polypeptide.. Together with its co-chaperonin GroES, plays an essential role in assisting protein folding. The GroEL-GroES system forms a nano-cage that allows encapsulation of the non-native substrate proteins and provides a physical environment optimized to promote and accelerate protein folding. The polypeptide is Chaperonin GroEL 1 (Roseiflexus sp. (strain RS-1)).